A 229-amino-acid polypeptide reads, in one-letter code: 2,3-bisphosphoglycerate-dependent phosphoglycerate mutase (229 aa).

Substrate is bound by residues 8-15, 21-22, Arg60, 87-90, Lys98, 114-115, and 183-184; these read RHGESAWN, TG, ERHY, RR, and GN. His9 serves as the catalytic Tele-phosphohistidine intermediate. Glu87 serves as the catalytic Proton donor/acceptor.

This sequence belongs to the phosphoglycerate mutase family. BPG-dependent PGAM subfamily. In terms of assembly, homodimer.

It carries out the reaction (2R)-2-phosphoglycerate = (2R)-3-phosphoglycerate. Its pathway is carbohydrate degradation; glycolysis; pyruvate from D-glyceraldehyde 3-phosphate: step 3/5. In terms of biological role, catalyzes the interconversion of 2-phosphoglycerate and 3-phosphoglycerate. The protein is 2,3-bisphosphoglycerate-dependent phosphoglycerate mutase of Polynucleobacter asymbioticus (strain DSM 18221 / CIP 109841 / QLW-P1DMWA-1) (Polynucleobacter necessarius subsp. asymbioticus).